The sequence spans 566 residues: Urease subunit alpha (566 aa).

A Urease domain is found at 128–566 (GGVDTHIHFI…LPMAQRYFLF (439 aa)). The Ni(2+) site is built by H133, H135, and K216. Residue K216 is modified to N6-carboxylysine. Residue H218 coordinates substrate. Residues H245 and H271 each coordinate Ni(2+). H319 serves as the catalytic Proton donor. Position 359 (D359) interacts with Ni(2+).

This sequence belongs to the metallo-dependent hydrolases superfamily. Urease alpha subunit family. As to quaternary structure, may form a heterohexamer of 3 UreC (alpha) and 3 UreAB (gamma/beta) subunits. May also form a heterotrimer of UreA (gamma), UreB (beta) and UreC (alpha) subunits. Three heterotrimers associate to form the active enzyme. The cofactor is Ni cation. In terms of processing, carboxylation allows a single lysine to coordinate two nickel ions.

It is found in the cytoplasm. The catalysed reaction is urea + 2 H2O + H(+) = hydrogencarbonate + 2 NH4(+). It participates in nitrogen metabolism; urea degradation; CO(2) and NH(3) from urea (urease route): step 1/1. The chain is Urease subunit alpha from Pseudomonas savastanoi pv. phaseolicola (strain 1448A / Race 6) (Pseudomonas syringae pv. phaseolicola (strain 1448A / Race 6)).